The following is a 147-amino-acid chain: Large ribosomal subunit protein uL15 (147 aa).

The span at 1–14 shows a compositional bias: basic and acidic residues; it reads MKLHELRPAEGAVR. The disordered stretch occupies residues 1 to 54; sequence MKLHELRPAEGAVRDRKRKGRGTASGLGKTAGRGSNGQKARSGGGVRPGFEGGQ. 2 stretches are compositionally biased toward gly residues: residues 23–35 and 42–52; these read TASG…GRGS and SGGGVRPGFEG.

The protein belongs to the universal ribosomal protein uL15 family. Part of the 50S ribosomal subunit.

Functionally, binds to the 23S rRNA. This is Large ribosomal subunit protein uL15 from Alkaliphilus oremlandii (strain OhILAs) (Clostridium oremlandii (strain OhILAs)).